The following is an 876-amino-acid chain: Leucine--tRNA ligase (876 aa).

A 'HIGH' region motif is present at residues 43–53 (PYPSGRIHMGH). The short motif at 632–636 (KMSKS) is the 'KMSKS' region element. K635 lines the ATP pocket.

This sequence belongs to the class-I aminoacyl-tRNA synthetase family.

Its subcellular location is the cytoplasm. It carries out the reaction tRNA(Leu) + L-leucine + ATP = L-leucyl-tRNA(Leu) + AMP + diphosphate. This is Leucine--tRNA ligase from Rhizobium etli (strain CIAT 652).